The primary structure comprises 702 residues: Polyribonucleotide nucleotidyltransferase (702 aa).

2 residues coordinate Mg(2+): Asp-485 and Asp-491. A KH domain is found at 552 to 612 (PRTEIICIDP…EGVKKAISII (61 aa)). The S1 motif domain maps to 622–690 (GEIYLGKVTK…NQGRINLSRK (69 aa)).

The protein belongs to the polyribonucleotide nucleotidyltransferase family. It depends on Mg(2+) as a cofactor.

The protein localises to the cytoplasm. It catalyses the reaction RNA(n+1) + phosphate = RNA(n) + a ribonucleoside 5'-diphosphate. Its function is as follows. Involved in mRNA degradation. Catalyzes the phosphorolysis of single-stranded polyribonucleotides processively in the 3'- to 5'-direction. The polypeptide is Polyribonucleotide nucleotidyltransferase (Clostridium botulinum (strain Loch Maree / Type A3)).